A 274-amino-acid chain; its full sequence is Large ribosomal subunit protein uL2 (274 aa).

A disordered region spans residues 223–256 (VVMNPVDHPHGGGEGKTGEGRHPVDPWGNLTKGY). The span at 229–246 (DHPHGGGEGKTGEGRHPV) shows a compositional bias: basic and acidic residues.

It belongs to the universal ribosomal protein uL2 family. Part of the 50S ribosomal subunit. Forms a bridge to the 30S subunit in the 70S ribosome.

Functionally, one of the primary rRNA binding proteins. Required for association of the 30S and 50S subunits to form the 70S ribosome, for tRNA binding and peptide bond formation. It has been suggested to have peptidyltransferase activity; this is somewhat controversial. Makes several contacts with the 16S rRNA in the 70S ribosome. The protein is Large ribosomal subunit protein uL2 of Variovorax paradoxus (strain S110).